The sequence spans 167 residues: Crossover junction endodeoxyribonuclease RuvC (167 aa).

Active-site residues include Asp-7, Glu-67, and Asp-140. Residues Asp-7, Glu-67, and Asp-140 each coordinate Mg(2+).

The protein belongs to the RuvC family. As to quaternary structure, homodimer which binds Holliday junction (HJ) DNA. The HJ becomes 2-fold symmetrical on binding to RuvC with unstacked arms; it has a different conformation from HJ DNA in complex with RuvA. In the full resolvosome a probable DNA-RuvA(4)-RuvB(12)-RuvC(2) complex forms which resolves the HJ. The cofactor is Mg(2+).

The protein localises to the cytoplasm. It carries out the reaction Endonucleolytic cleavage at a junction such as a reciprocal single-stranded crossover between two homologous DNA duplexes (Holliday junction).. Functionally, the RuvA-RuvB-RuvC complex processes Holliday junction (HJ) DNA during genetic recombination and DNA repair. Endonuclease that resolves HJ intermediates. Cleaves cruciform DNA by making single-stranded nicks across the HJ at symmetrical positions within the homologous arms, yielding a 5'-phosphate and a 3'-hydroxyl group; requires a central core of homology in the junction. The consensus cleavage sequence is 5'-(A/T)TT(C/G)-3'. Cleavage occurs on the 3'-side of the TT dinucleotide at the point of strand exchange. HJ branch migration catalyzed by RuvA-RuvB allows RuvC to scan DNA until it finds its consensus sequence, where it cleaves and resolves the cruciform DNA. The chain is Crossover junction endodeoxyribonuclease RuvC from Dehalococcoides mccartyi (strain ATCC BAA-2100 / JCM 16839 / KCTC 5957 / BAV1).